A 784-amino-acid polypeptide reads, in one-letter code: Protein translocase subunit SecA 2 (784 aa).

Residues glutamine 94, 112–116, and aspartate 501 contribute to the ATP site; that span reads GEGKT.

It belongs to the SecA family. Monomer and homodimer. Part of the essential Sec protein translocation apparatus which comprises SecA, SecYEG and auxiliary proteins SecDF. Other proteins may also be involved.

The protein localises to the cell membrane. Its subcellular location is the cytoplasm. It catalyses the reaction ATP + H2O + cellular proteinSide 1 = ADP + phosphate + cellular proteinSide 2.. Its function is as follows. Part of the Sec protein translocase complex. Interacts with the SecYEG preprotein conducting channel. Has a central role in coupling the hydrolysis of ATP to the transfer of proteins into and across the cell membrane, serving as an ATP-driven molecular motor driving the stepwise translocation of polypeptide chains across the membrane. In Mycolicibacterium smegmatis (strain ATCC 700084 / mc(2)155) (Mycobacterium smegmatis), this protein is Protein translocase subunit SecA 2.